Here is a 780-residue protein sequence, read N- to C-terminus: Oocyte zinc finger protein XlCOF8.4 (780 aa).

15 consecutive C2H2-type zinc fingers follow at residues 250–272 (FPCSECGKCFAGSSELNVHRRTH), 278–300 (FSCSQCGKCFSNQTKLKYHHRTH), 306–328 (FSCSECGKCFSTPHVRARHQKTH), 334–356 (FPCSECGKCFARSSDVTVHRRTH), 362–384 (YSCSQCGKCFTRSSDLNVHRRTH), 390–412 (YSCSHCGKCFTTSSELNVHRRTH), 418–440 (YSCSECGKSFPTSSEFTSHWKTH), 446–468 (FSCVQCGKCFSKDTHLKYHYRTH), 474–496 (FSCFECGKCFTHNGSLKVHLKIH), 618–640 (LSCSECGKCFSTYHVLARHQKTH), 646–668 (FSCSECEKCYARSSDLNVHRRTH), 674–696 (YSCSECGKCFTRSSDFNVHRRTH), 702–724 (YSCSECGRCFPTSSVLTSHWRTH), 730–752 (FSCTECGKCFSRETYLKYHHRTH), and 758–780 (FSCSECGKCFTCNSSLKVHFQLH).

This sequence belongs to the krueppel C2H2-type zinc-finger protein family.

The protein localises to the nucleus. In terms of biological role, may be involved in transcriptional regulation. The protein is Oocyte zinc finger protein XlCOF8.4 of Xenopus laevis (African clawed frog).